Reading from the N-terminus, the 376-residue chain is MQCALYDAGRCRSCQWITQSVNEQLSAKTADLHRLLAGLPVEQWCAPIGGPEQHFRNKAKMVVSGSVEKPLFGMLHRDGTPVDLCGCPLYPASFAPVFSALKPFIARAGLTPYNVARKRGELKYLLLTESQFDGGMMLRFVLRSETKLTQLRAALPWLRAQLPQLRVITANIQPVHMAIMEGETEIYLTDQQALVERFNDVPLWIRPQSFFQTNPTVASRLYATARDWVGQLPVRHMWDLFCGVGGFGLHCATPQMQLTGIEIAPEAIACAKQSAAELGLTRLHFQALDSTQFAIAQGETPDLVLVNPPRRGIGKPLCDYLAQMAPRFIIYSSCNAQTMAQDIRHLPNYRIQRVQLFDMFPHTAHYEVLALLRRSI.

Residues C3, C11, C14, and C87 each contribute to the [4Fe-4S] cluster site. Residues Q212, F241, E262, and N307 each contribute to the S-adenosyl-L-methionine site. The Nucleophile role is filled by C334.

It belongs to the class I-like SAM-binding methyltransferase superfamily. RNA M5U methyltransferase family. RlmC subfamily.

It catalyses the reaction uridine(747) in 23S rRNA + S-adenosyl-L-methionine = 5-methyluridine(747) in 23S rRNA + S-adenosyl-L-homocysteine + H(+). Its function is as follows. Catalyzes the formation of 5-methyl-uridine at position 747 (m5U747) in 23S rRNA. The chain is 23S rRNA (uracil(747)-C(5))-methyltransferase RlmC from Salmonella choleraesuis (strain SC-B67).